The primary structure comprises 228 residues: Urease accessory protein UreE (228 aa).

A disordered region spans residues P188–H228. Basic and acidic residues predominate over residues S204–H228.

The protein belongs to the UreE family.

Its subcellular location is the cytoplasm. Involved in urease metallocenter assembly. Binds nickel. Probably functions as a nickel donor during metallocenter assembly. The chain is Urease accessory protein UreE from Yersinia kristensenii.